The primary structure comprises 605 residues: MNHFPKLLSSQIGFDVAQTMLEYFDRHYRIFREAAVDAKTLFERGDWHGLQRLARERITSYDERVKECVEVLEDEYDAENIDDEVWQQIKLHYIGLLTSHRQPECAETFFNSVCCKILHRSYFSNDFIFVRPAISTEYLENDEPAAKPTYRAYYPGTDGLAVTLERIVTNFQLDPPFEDLTRDIGCVMQAIDDEFGHFDEAPNFQIHVLSSLFFRNKSAYIVGRIINADRVLPFAVPIRHVRPGVLALDTVLLRRDLLQIIFSFSHSYFLVDMGVPSAYVDFLCTIMPGKPKAEIYTSVGLQKQGKNLFYRDLLHHLSHSSDRFIIAPGIKGLVMLVFTLPSFPYVFKIIKDHFPPPKETTRAQIMEKYQLVKRHDRLGRMADTLEYSSVALPLARLDHALVRELEKEVPSLLEYEDDKLVIKHLYIERRMTPLNLYLQNGSDADVEHGVKEYGNAVKELMKANIFPGDMLYKNFGVTRHGRVVFYDYDEIEYLTDCNVRRVPPPRNEEDELSGEPWYTVGPHDIFPETYGPFLLGDPRVRSVFMKHHADFFDPALWQASKDKLMQGELPDFYPYDATLRFSVRYPARFGATGENDGAGDAQRAA.

Residues 327–333 (APGIKGL) and Lys348 contribute to the ATP site. Asp383 is a catalytic residue.

The protein belongs to the AceK family.

Its subcellular location is the cytoplasm. It carries out the reaction L-seryl-[isocitrate dehydrogenase] + ATP = O-phospho-L-seryl-[isocitrate dehydrogenase] + ADP + H(+). Bifunctional enzyme which can phosphorylate or dephosphorylate isocitrate dehydrogenase (IDH) on a specific serine residue. This is a regulatory mechanism which enables bacteria to bypass the Krebs cycle via the glyoxylate shunt in response to the source of carbon. When bacteria are grown on glucose, IDH is fully active and unphosphorylated, but when grown on acetate or ethanol, the activity of IDH declines drastically concomitant with its phosphorylation. This is Isocitrate dehydrogenase kinase/phosphatase from Burkholderia orbicola (strain AU 1054).